A 90-amino-acid chain; its full sequence is MTSKTVFQNAFKTFLDFAINSLPSTQGGLNITATAPGGVGQRPFTNKAGVLKLIFVSASSLYIGGLIAHKGASYLEENEIFVPTDEDDDD.

A helical transmembrane segment spans residues 49 to 68 (GVLKLIFVSASSLYIGGLIA).

This sequence belongs to the SMDT1/EMRE family.

The protein resides in the mitochondrion inner membrane. Its function is as follows. Essential regulatory subunit of the mitochondrial calcium uniporter (mcu-1) channel, a protein that mediates calcium uptake into mitochondria. The sequence is that of Essential MCU regulator, mitochondrial from Caenorhabditis elegans.